A 156-amino-acid polypeptide reads, in one-letter code: 6,7-dimethyl-8-ribityllumazine synthase (156 aa).

Residues Phe22, 57–59 (AYE), and 81–83 (TVI) contribute to the 5-amino-6-(D-ribitylamino)uracil site. 86 to 87 (GT) provides a ligand contact to (2S)-2-hydroxy-3-oxobutyl phosphate. The Proton donor role is filled by His89. Phe114 lines the 5-amino-6-(D-ribitylamino)uracil pocket. Arg128 lines the (2S)-2-hydroxy-3-oxobutyl phosphate pocket.

This sequence belongs to the DMRL synthase family. Forms an icosahedral capsid composed of 60 subunits, arranged as a dodecamer of pentamers.

The enzyme catalyses (2S)-2-hydroxy-3-oxobutyl phosphate + 5-amino-6-(D-ribitylamino)uracil = 6,7-dimethyl-8-(1-D-ribityl)lumazine + phosphate + 2 H2O + H(+). It participates in cofactor biosynthesis; riboflavin biosynthesis; riboflavin from 2-hydroxy-3-oxobutyl phosphate and 5-amino-6-(D-ribitylamino)uracil: step 1/2. Catalyzes the formation of 6,7-dimethyl-8-ribityllumazine by condensation of 5-amino-6-(D-ribitylamino)uracil with 3,4-dihydroxy-2-butanone 4-phosphate. This is the penultimate step in the biosynthesis of riboflavin. In Yersinia pseudotuberculosis serotype O:1b (strain IP 31758), this protein is 6,7-dimethyl-8-ribityllumazine synthase.